Here is a 219-residue protein sequence, read N- to C-terminus: MKLLLWACIVCVAFARKRRFPFIGEDDNDDGHPLHPSLNIPYGIRNLPPPLYYRPVNTVPSYPGNTYTDTGLPSYPWILTSPGFPYVYHIRGFPLATQLNVPPLPPRGFPFVPPSRFFSAAAAPAAPPIAAEPAAAAPLTATPVAAEPAAGAPVAAEPAAEAPVGAEPAAEAPVAAEPAAEAPVGVEPAAEEPSPAEPATAKPAAPEPHPSPSLEQANQ.

The N-terminal stretch at 1–15 (MKLLLWACIVCVAFA) is a signal peptide. Residues 155–204 (AAEPAAEAPVGAEPAAEAPVAAEPAAEAPVGVEPAAEEPSPAEPATAKPA) show a composition bias toward low complexity. A disordered region spans residues 155–219 (AAEPAAEAPV…PSPSLEQANQ (65 aa)).

The protein resides in the secreted. This Homo sapiens (Human) protein is Proline-rich protein 27 (PRR27).